Here is a 164-residue protein sequence, read N- to C-terminus: R-phycoerythrin alpha chain (164 aa).

Residues asparagine 47, lysine 81, cysteine 82, arginine 84, histidine 88, arginine 137, cysteine 139, and arginine 142 each contribute to the (2R,3E)-phycoerythrobilin site.

This sequence belongs to the phycobiliprotein family. Heterododecamer of 6 alpha and 6 beta chains. The basic functional unit of phycobiliproteins is a ring-shaped hexamer formed from two back-to-back trimers contacting via the alpha chain subunits. The trimers are composed of alpha/beta subunit heterodimers arranged around a three-fold axis of symmetry. The phycoerythrins also contain a gamma subunit which is located in the center of the hexamer. Post-translationally, contains two covalently linked phycoerythrobilin chromophores. In PubMed:8876649 the authors refer to the bilins as phycoerythrobilins. In the PDB entries, the bilins are named as phycocyanobilins although the modeled compounds correspond to phycoerythrobilins.

It is found in the plastid. It localises to the chloroplast thylakoid membrane. In terms of biological role, light-harvesting photosynthetic tetrapyrrole chromophore-protein from the phycobiliprotein complex. The polypeptide is R-phycoerythrin alpha chain (cpeA) (Polysiphonia urceolata (Red alga)).